Reading from the N-terminus, the 218-residue chain is Ribose-5-phosphate isomerase A (218 aa).

Substrate is bound by residues 28 to 31, 81 to 84, and 94 to 97; these read TGST, DGAD, and KGGG. The active-site Proton acceptor is Glu-103. Lys-121 contributes to the substrate binding site.

It belongs to the ribose 5-phosphate isomerase family. In terms of assembly, homodimer.

It catalyses the reaction aldehydo-D-ribose 5-phosphate = D-ribulose 5-phosphate. It participates in carbohydrate degradation; pentose phosphate pathway; D-ribose 5-phosphate from D-ribulose 5-phosphate (non-oxidative stage): step 1/1. Functionally, catalyzes the reversible conversion of ribose-5-phosphate to ribulose 5-phosphate. This is Ribose-5-phosphate isomerase A from Sodalis glossinidius (strain morsitans).